We begin with the raw amino-acid sequence, 486 residues long: Membrane-bound lytic murein transglycosylase F (486 aa).

The N-terminal stretch at 1–26 (MFSPMALRPRCAKWLIVTGLFLMLGA) is a signal peptide. A non-LT domain region spans residues 27–267 (CVEKPSTLER…RLKDRYYGHV (241 aa)). Residues 268 to 486 (DVLGYVGAYT…TKPPEENPPL (219 aa)) are LT domain. E314 is a catalytic residue. The interval 464-486 (VAEGNLHVPGVNKTKPPEENPPL) is disordered.

It in the N-terminal section; belongs to the bacterial solute-binding protein 3 family. This sequence in the C-terminal section; belongs to the transglycosylase Slt family.

It is found in the cell outer membrane. The enzyme catalyses Exolytic cleavage of the (1-&gt;4)-beta-glycosidic linkage between N-acetylmuramic acid (MurNAc) and N-acetylglucosamine (GlcNAc) residues in peptidoglycan, from either the reducing or the non-reducing ends of the peptidoglycan chains, with concomitant formation of a 1,6-anhydrobond in the MurNAc residue.. In terms of biological role, murein-degrading enzyme that degrades murein glycan strands and insoluble, high-molecular weight murein sacculi, with the concomitant formation of a 1,6-anhydromuramoyl product. Lytic transglycosylases (LTs) play an integral role in the metabolism of the peptidoglycan (PG) sacculus. Their lytic action creates space within the PG sacculus to allow for its expansion as well as for the insertion of various structures such as secretion systems and flagella. The polypeptide is Membrane-bound lytic murein transglycosylase F (Pseudomonas fluorescens (strain ATCC BAA-477 / NRRL B-23932 / Pf-5)).